A 208-amino-acid polypeptide reads, in one-letter code: Small ribosomal subunit protein uS4 (208 aa).

The disordered stretch occupies residues 31–50; it reads SALDKRAYGPGQHGQRRTKT. One can recognise an S4 RNA-binding domain in the interval 98-161; sequence RRLDNVVYRM…KSNPQVVRAM (64 aa).

Belongs to the universal ribosomal protein uS4 family. Part of the 30S ribosomal subunit. Contacts protein S5. The interaction surface between S4 and S5 is involved in control of translational fidelity.

Functionally, one of the primary rRNA binding proteins, it binds directly to 16S rRNA where it nucleates assembly of the body of the 30S subunit. With S5 and S12 plays an important role in translational accuracy. The chain is Small ribosomal subunit protein uS4 from Helicobacter pylori (strain J99 / ATCC 700824) (Campylobacter pylori J99).